The primary structure comprises 299 residues: NmrA-like family domain-containing protein 1 (299 aa).

Residues 11–16, 37–41, 58–59, 79–81, K92, K133, and 155–158 each bind NADP(+); these read GATGAQ, RDPGQ, DQ, TNY, and YFEN. The tract at residues 153 to 189 is interaction with ASS1; that stretch reads PCYFENLLSYFLPQKAPDGRSYLLSLPMGDVPIDGMS.

Belongs to the NmrA-type oxidoreductase family. As to quaternary structure, homodimer. Interacts with ASS1. Interaction is enhanced by low NADPH/NADP(+) ratios, which results in inhibition of ASS1 activity.

It is found in the cytoplasm. Its subcellular location is the perinuclear region. It localises to the nucleus. Redox sensor protein. Undergoes restructuring and subcellular redistribution in response to changes in intracellular NADPH/NADP(+) levels. At low NADPH concentrations the protein is found mainly as a monomer, and binds argininosuccinate synthase (ASS1), the enzyme involved in nitric oxide synthesis. Association with ASS1 impairs its activity and reduces the production of nitric oxide, which subsecuently prevents apoptosis. Under normal NADPH concentrations, the protein is found as a dimer and hides the binding site for ASS1. The homodimer binds one molecule of NADPH. Has higher affinity for NADPH than for NADP(+). Binding to NADPH is necessary to form a stable dimer. The polypeptide is NmrA-like family domain-containing protein 1 (NMRAL1) (Bos taurus (Bovine)).